A 312-amino-acid polypeptide reads, in one-letter code: Peptide methionine sulfoxide reductase MsrA/MsrB 1 (312 aa).

The interval 1–155 (MAEIYLAGGC…PSGYCHIDVT (155 aa)) is peptide methionine sulfoxide reductase. Cys10 is a catalytic residue. The 124-residue stretch at 172 to 295 (QEVLKASLSE…NSASLRFVAK (124 aa)) folds into the MsrB domain. Cys284 acts as the Nucleophile in catalysis.

It in the N-terminal section; belongs to the MsrA Met sulfoxide reductase family. This sequence in the C-terminal section; belongs to the MsrB Met sulfoxide reductase family.

It localises to the cell membrane. The catalysed reaction is L-methionyl-[protein] + [thioredoxin]-disulfide + H2O = L-methionyl-(S)-S-oxide-[protein] + [thioredoxin]-dithiol. The enzyme catalyses [thioredoxin]-disulfide + L-methionine + H2O = L-methionine (S)-S-oxide + [thioredoxin]-dithiol. It catalyses the reaction L-methionyl-[protein] + [thioredoxin]-disulfide + H2O = L-methionyl-(R)-S-oxide-[protein] + [thioredoxin]-dithiol. Has an important function as a repair enzyme for proteins that have been inactivated by oxidation. Catalyzes the reversible oxidation-reduction of methionine sulfoxide in proteins to methionine. The protein is Peptide methionine sulfoxide reductase MsrA/MsrB 1 (msrAB1) of Streptococcus pneumoniae serotype 4 (strain ATCC BAA-334 / TIGR4).